Here is a 141-residue protein sequence, read N- to C-terminus: Small ribosomal subunit protein bS6 (141 aa).

Positions 97-141 (TGQSEMLKAEENRSERRERRDRPEHSDSADGDDGDNSDVSDNADE) are disordered. A compositionally biased stretch (basic and acidic residues) spans 103 to 124 (LKAEENRSERRERRDRPEHSDS). Acidic residues predominate over residues 125 to 141 (ADGDDGDNSDVSDNADE).

It belongs to the bacterial ribosomal protein bS6 family.

In terms of biological role, binds together with bS18 to 16S ribosomal RNA. In Pseudomonas syringae pv. syringae (strain B728a), this protein is Small ribosomal subunit protein bS6.